A 639-amino-acid polypeptide reads, in one-letter code: Serine protease HtrA-like (639 aa).

4 stretches are compositionally biased toward basic and acidic residues: residues 1-13 (MDNDKKHVIPREQ), 21-75 (YFHN…EIHQ), 106-187 (QQLK…KESS), and 195-205 (KSQKIEQKEQK). The interval 1–262 (MDNDKKHVIP…LENEPKNNDT (262 aa)) is disordered. Over residues 206–219 (ASSNETSNKELNSY) the composition is skewed to polar residues. 2 stretches are compositionally biased toward basic and acidic residues: residues 220 to 235 (TKDKNNKVEDNQDLKK) and 245 to 262 (NKLEENEHLENEPKNNDT). Residues 277 to 297 (IVIVVAIILIVILISAIISTM) traverse the membrane as a helical segment. Catalysis depends on charge relay system residues H374, D404, and S489. In terms of domain architecture, PDZ spans 527-629 (EIAEELEKKG…TLSAKIYREG (103 aa)).

Belongs to the peptidase S1C family.

It localises to the cell membrane. The protein is Serine protease HtrA-like of Staphylococcus haemolyticus (strain JCSC1435).